The chain runs to 446 residues: Acyl-lipid (8-3)-desaturase (446 aa).

Positions 6–82 (GKTFTWEELA…MKKYYVGTLV (77 aa)) constitute a Cytochrome b5 heme-binding domain. Heme contacts are provided by His-41 and His-64. The next 2 membrane-spanning stretches (helical) occupy residues 125 to 145 (ALIF…PFVV) and 150 to 170 (LQVV…LNPL). Positions 171–175 (HDASH) match the Histidine box-1 motif. The Histidine box-2 motif lies at 207-212 (HMLGHH). Positions 387 to 391 (QAVHH) match the Histidine box-3 motif.

Belongs to the fatty acid desaturase type 1 family. Requires Fe(2+) as cofactor.

It is found in the membrane. It catalyses the reaction an (8Z,11Z,14Z)-icosatrienoyl-containing glycerolipid + 2 Fe(II)-[cytochrome b5] + O2 + 2 H(+) = (5Z,8Z,11Z,14Z)-eicosatetraenoyl-containing glycerolipid + 2 Fe(III)-[cytochrome b5] + 2 H2O. It carries out the reaction an (8Z,11Z,14Z,17Z)-eicosatetraenoyl-containing glycerolipid + 2 Fe(II)-[cytochrome b5] + O2 + 2 H(+) = a (5Z,8Z,11Z,14Z,17Z)-eicosapentaenoyl-containing glycerolipid + 2 Fe(III)-[cytochrome b5] + 2 H2O. Functionally, fatty acid desaturase that introduces a cis double bond at the 5-position in 20-carbon polyunsaturated fatty acids incorporated in a glycerolipid that contain a Delta(8) double bond. Involved in the conversion of di-homo-Delta-linolenic acid to arachidonic acid. Essential in the production of eicosanoids. The polypeptide is Acyl-lipid (8-3)-desaturase (DES1) (Mortierella alpina (Oleaginous fungus)).